The following is a 127-amino-acid chain: V-type proton ATPase subunit F (127 aa).

It belongs to the V-ATPase F subunit family. V-ATPase is a heteromultimeric enzyme made up of two complexes: the ATP-hydrolytic V1 complex and the proton translocation V0 complex. The V1 complex consists of three catalytic AB heterodimers that form a heterohexamer, three peripheral stalks each consisting of EG heterodimers, one central rotor including subunits D and F, and the regulatory subunits C and H. The proton translocation complex V0 consists of the proton transport subunit a, a ring of proteolipid subunits c9c'', rotary subunit d, subunits e and f, and the accessory subunits VhaAC45 and ATP6AP2.

Its function is as follows. Subunit of the V1 complex of vacuolar(H+)-ATPase (V-ATPase), a multisubunit enzyme composed of a peripheral complex (V1) that hydrolyzes ATP and a membrane integral complex (V0) that translocates protons. V-ATPase is responsible for acidifying and maintaining the pH of intracellular compartments and in some cell types, is targeted to the plasma membrane, where it is responsible for acidifying the extracellular environment. The chain is V-type proton ATPase subunit F from Aedes aegypti (Yellowfever mosquito).